The following is a 173-amino-acid chain: Small ribosomal subunit protein uS11m (173 aa).

Belongs to the universal ribosomal protein uS11 family.

The protein localises to the mitochondrion. The polypeptide is Small ribosomal subunit protein uS11m (RPS11) (Acanthamoeba castellanii (Amoeba)).